The sequence spans 505 residues: ATP synthase subunit alpha (505 aa).

170-177 (GDRQTGKS) provides a ligand contact to ATP.

Belongs to the ATPase alpha/beta chains family. As to quaternary structure, F-type ATPases have 2 components, CF(1) - the catalytic core - and CF(0) - the membrane proton channel. CF(1) has five subunits: alpha(3), beta(3), gamma(1), delta(1), epsilon(1). CF(0) has four main subunits: a(1), b(1), b'(1) and c(9-12).

It is found in the cellular thylakoid membrane. It catalyses the reaction ATP + H2O + 4 H(+)(in) = ADP + phosphate + 5 H(+)(out). Its function is as follows. Produces ATP from ADP in the presence of a proton gradient across the membrane. The alpha chain is a regulatory subunit. The polypeptide is ATP synthase subunit alpha (Prochlorococcus marinus (strain MIT 9312)).